The following is a 392-amino-acid chain: 2,3-bisphosphoglycerate-independent phosphoglycerate mutase (392 aa).

The protein belongs to the BPG-independent phosphoglycerate mutase family. A-PGAM subfamily.

It carries out the reaction (2R)-2-phosphoglycerate = (2R)-3-phosphoglycerate. The protein operates within carbohydrate degradation; glycolysis; pyruvate from D-glyceraldehyde 3-phosphate: step 3/5. Functionally, catalyzes the interconversion of 2-phosphoglycerate and 3-phosphoglycerate. This chain is 2,3-bisphosphoglycerate-independent phosphoglycerate mutase, found in Methanothrix thermoacetophila (strain DSM 6194 / JCM 14653 / NBRC 101360 / PT) (Methanosaeta thermophila).